A 466-amino-acid chain; its full sequence is E3 SUMO-protein ligase TRIM60 (466 aa).

An RING-type zinc finger spans residues 15–56; the sequence is CYICSDFMEDPVTSRCGHNFCFACLRLLWDDLQGNIFCPVCQ. The segment at 91-132 adopts a B box-type zinc-finger fold; sequence EEHTVCPKHDQPLVLFCVRDRDVLCTQCSLSVEHQGHYTCPI. Positions 96, 99, 118, and 124 each coordinate Zn(2+). The stretch at 171-223 forms a coiled coil; that stretch reads LREEAQYQKIEIRYEIGQIKLFLQSEYEAHLNESHMEELRSFSELNGYLETLL. Residues 272-462 form the B30.2/SPRY domain; sequence LSLPAQYSGL…LEILTHPTPD (191 aa).

This sequence belongs to the TRIM/RBCC family.

Its function is as follows. E3 SUMO-protein ligase that mediates SUMOylation of TAB2 leading to inhibition of NF-kappa-B and MAPK pathways by suppressing the TRAF6/TAB2/TAK1 complex. In Mus musculus (Mouse), this protein is E3 SUMO-protein ligase TRIM60 (Trim60).